The primary structure comprises 978 residues: Mineralocorticoid receptor (978 aa).

Positions 1 to 602 are modulating; sequence METKGYHSLP…STGSSRPSKI (602 aa). Over residues 234-243 the composition is skewed to polar residues; that stretch reads SLTCSPSVEN. 2 disordered regions span residues 234–331 and 353–372; these read SLTC…STVG and GAIQ…AHDV. A phosphoserine mark is found at S250, S259, S283, S287, and S299. Residues 259–300 are compositionally biased toward low complexity; sequence SPLSSPLSSMKSPISSPPSHCSVKSPVSSPNNVPLRSSVSSP. Residues 301 to 331 are compositionally biased toward polar residues; that stretch reads ANLNNSRCSVSSPSNTNNRSTLSSPTASTVG. Residues C603, C606, C620, C623, C637, C643, C653, and C656 each contribute to the Zn(2+) site. NR C4-type zinc fingers lie at residues 603–623 and 637–661; these read CLVC…CGSC and CAGR…LQKC. Residues 603–666 constitute a DNA-binding region (nuclear receptor); that stretch reads CLVCGDEASG…RLQKCLQAGM (64 aa). Residues 667–719 form a hinge region; it reads NLGARKSKKLGKLKGLHEEQPQQPPPPPPQSPEEGTTYIAPTKEPSVNSALVP. Residues 681–706 are disordered; that stretch reads GLHEEQPQQPPPPPPQSPEEGTTYIA. Over residues 688 to 697 the composition is skewed to pro residues; that stretch reads QQPPPPPPQS. The region spanning 720–958 is the NR LBD domain; that stretch reads QLASITRALT…EFPAMLVEII (239 aa). Positions 764 and 770 each coordinate 21-hydroxyprogesterone. Residues N764 and Q770 each contribute to the aldosterone site. 2 residues coordinate progesterone: N764 and Q770. Residues 776–779 form an important for coactivator binding region; the sequence is KWAK. 21-hydroxyprogesterone contacts are provided by R811 and T939. Residues R811 and T939 each coordinate aldosterone. Positions 811 and 939 each coordinate progesterone.

It belongs to the nuclear hormone receptor family. NR3 subfamily. As to quaternary structure, heteromultimeric cytoplasmic complex with HSP90, HSP70, and FKBP4, in the absence of ligand. After ligand binding, it translocates to the nucleus and binds to DNA as a homodimer and as a heterodimer with NR3C1. Binds the coactivator NCOA2. May interact with HSD11B2 in the absence of ligand. Binds the coactivators NCOA1, TIF1 and NRIP1. In terms of processing, phosphorylated. In terms of tissue distribution, expressed in heart and kidney.

It is found in the cytoplasm. It localises to the nucleus. Its subcellular location is the endoplasmic reticulum membrane. In terms of biological role, receptor for both mineralocorticoids (MC) such as aldosterone and glucocorticoids (GC) such as corticosterone or cortisol. Binds to mineralocorticoid response elements (MRE) and transactivates target genes. The effect of MC is to increase ion and water transport and thus raise extracellular fluid volume and blood pressure and lower potassium levels. This chain is Mineralocorticoid receptor (Nr3c2), found in Mus musculus (Mouse).